A 384-amino-acid polypeptide reads, in one-letter code: S-adenosylmethionine synthase (384 aa).

H15 is a binding site for ATP. D17 contributes to the Mg(2+) binding site. E43 lines the K(+) pocket. The L-methionine site is built by E56 and Q99. Residues 99–109 (QSSDINQGVDR) are flexible loop. ATP contacts are provided by residues 164–166 (DAK), 230–231 (RF), D239, 245–246 (RK), A262, and K266. An L-methionine-binding site is contributed by D239. Residue K270 participates in L-methionine binding.

It belongs to the AdoMet synthase family. Homotetramer; dimer of dimers. The cofactor is Mg(2+). K(+) is required as a cofactor.

The protein localises to the cytoplasm. It catalyses the reaction L-methionine + ATP + H2O = S-adenosyl-L-methionine + phosphate + diphosphate. Its pathway is amino-acid biosynthesis; S-adenosyl-L-methionine biosynthesis; S-adenosyl-L-methionine from L-methionine: step 1/1. Functionally, catalyzes the formation of S-adenosylmethionine (AdoMet) from methionine and ATP. The overall synthetic reaction is composed of two sequential steps, AdoMet formation and the subsequent tripolyphosphate hydrolysis which occurs prior to release of AdoMet from the enzyme. This is S-adenosylmethionine synthase from Pasteurella multocida (strain Pm70).